Here is a 550-residue protein sequence, read N- to C-terminus: Undecaprenyl phosphate-alpha-4-amino-4-deoxy-L-arabinose arabinosyl transferase 2 (550 aa).

Helical transmembrane passes span 4–24 (LKPG…PLSF), 81–101 (FAVH…VYWL), 110–132 (WLGL…GTYA), 176–196 (FMTK…PWVI), 204–224 (VFIY…PWVI), 255–275 (APFW…LGLL), 288–308 (TQSG…FFSL), 313–333 (LPTY…RYAA), 348–368 (LLFG…WGLA), 381–401 (VLLG…TLRA), and 409–429 (AALC…QQVI).

It belongs to the glycosyltransferase 83 family.

The protein resides in the cell inner membrane. The enzyme catalyses 4-amino-4-deoxy-alpha-L-arabinopyranosyl di-trans,octa-cis-undecaprenyl phosphate + lipid IVA = lipid IIA + di-trans,octa-cis-undecaprenyl phosphate.. It participates in lipopolysaccharide metabolism; 4-amino-4-deoxy-beta-L-arabinose-lipid A biosynthesis. Its function is as follows. Catalyzes the transfer of the L-Ara4N moiety of the glycolipid undecaprenyl phosphate-alpha-L-Ara4N to lipid A. The modified arabinose is attached to lipid A and is required for resistance to polymyxin and cationic antimicrobial peptides. The polypeptide is Undecaprenyl phosphate-alpha-4-amino-4-deoxy-L-arabinose arabinosyl transferase 2 (Sodalis glossinidius (strain morsitans)).